The primary structure comprises 110 residues: Large ribosomal subunit protein uL22 (110 aa).

It belongs to the universal ribosomal protein uL22 family. As to quaternary structure, part of the 50S ribosomal subunit.

In terms of biological role, this protein binds specifically to 23S rRNA; its binding is stimulated by other ribosomal proteins, e.g. L4, L17, and L20. It is important during the early stages of 50S assembly. It makes multiple contacts with different domains of the 23S rRNA in the assembled 50S subunit and ribosome. The globular domain of the protein is located near the polypeptide exit tunnel on the outside of the subunit, while an extended beta-hairpin is found that lines the wall of the exit tunnel in the center of the 70S ribosome. This Saccharophagus degradans (strain 2-40 / ATCC 43961 / DSM 17024) protein is Large ribosomal subunit protein uL22.